The following is a 140-amino-acid chain: Class I hydrophobin 1 (140 aa).

The N-terminal stretch at 1 to 18 (MKFAAVVVLAAAAAAVSA) is a signal peptide. The disordered stretch occupies residues 22 to 60 (AQRMARGLPPKAPIRRHGTPADTEKRSHPSSTGGGQCNT). 4 cysteine pairs are disulfide-bonded: C58/C119, C65/C113, C66/C99, and C120/C133.

This sequence belongs to the fungal hydrophobin family. As to quaternary structure, self-assembles to form functional amyloid fibrils called rodlets. Self-assembly into fibrillar rodlets occurs spontaneously at hydrophobic:hydrophilic interfaces and the rodlets further associate laterally to form amphipathic monolayers.

The protein resides in the secreted. It localises to the cell wall. Aerial growth, conidiation, and dispersal of filamentous fungi in the environment rely upon a capability of their secreting small amphipathic proteins called hydrophobins (HPBs) with low sequence identity. Class I can self-assemble into an outermost layer of rodlet bundles on aerial cell surfaces, conferring cellular hydrophobicity that supports fungal growth, development and dispersal; whereas Class II form highly ordered films at water-air interfaces through intermolecular interactions but contribute nothing to the rodlet structure. The protein is Class I hydrophobin 1 of Pisolithus tinctorius (Dead man's foot).